The sequence spans 413 residues: Calsequestrin-2 (413 aa).

The signal sequence occupies residues 1–19 (MKRIYLLVVGLYLLSFSRA). At Tyr282 the chain carries Phosphotyrosine. A glycan (N-linked (GlcNAc...) asparagine) is linked at Asn335. The disordered stretch occupies residues 365 to 413 (VLSGKINTEDDDNEDEDDDGDNDNDDDDDDDDNSDEDNDDSDDDDDDDE). Over residues 373-413 (EDDDNEDEDDDGDNDNDDDDDDDDNSDEDNDDSDDDDDDDE) the composition is skewed to acidic residues. Phosphoserine occurs at positions 398 and 405.

This sequence belongs to the calsequestrin family. In terms of assembly, monomer, homodimer and homooligomer. Mostly monomeric in the absence of calcium. Forms higher oligomers in a calcium-dependent manner. Dimers associate to form tetramers, that then form linear homomer chains. Interacts with ASPH and TRDN. In terms of processing, phosphorylation in the C-terminus, probably by CK2, moderately increases calcium buffering capacity. Post-translationally, N-glycosylated. In terms of tissue distribution, detected in stomach and vas deferens (at protein level).

It localises to the sarcoplasmic reticulum lumen. Functionally, calsequestrin is a high-capacity, moderate affinity, calcium-binding protein and thus acts as an internal calcium store in muscle. Calcium ions are bound by clusters of acidic residues at the protein surface, especially at the interface between subunits. Can bind around 60 Ca(2+) ions. Regulates the release of lumenal Ca(2+) via the calcium release channel RYR2; this plays an important role in triggering muscle contraction. Plays a role in excitation-contraction coupling in the heart and in regulating the rate of heart beats. The chain is Calsequestrin-2 (Casq2) from Rattus norvegicus (Rat).